A 942-amino-acid chain; its full sequence is Eukaryotic translation initiation factor 3 subunit A (942 aa).

Residues phenylalanine 320–phenylalanine 494 form the PCI domain. 4 coiled-coil regions span residues lysine 499 to isoleucine 529, isoleucine 588 to glutamate 669, serine 705 to lysine 734, and isoleucine 821 to glutamine 912. Residues glycine 502–proline 546 form a disordered region. Positions valine 504–asparagine 538 are enriched in acidic residues. Composition is skewed to basic and acidic residues over residues arginine 836–serine 870 and arginine 889–alanine 911. The interval arginine 836–lysine 942 is disordered.

Belongs to the eIF-3 subunit A family. Component of the eukaryotic translation initiation factor 3 (eIF-3) complex.

Its subcellular location is the cytoplasm. Functionally, RNA-binding component of the eukaryotic translation initiation factor 3 (eIF-3) complex, which is involved in protein synthesis of a specialized repertoire of mRNAs and, together with other initiation factors, stimulates binding of mRNA and methionyl-tRNAi to the 40S ribosome. The eIF-3 complex specifically targets and initiates translation of a subset of mRNAs involved in cell proliferation. The sequence is that of Eukaryotic translation initiation factor 3 subunit A from Vanderwaltozyma polyspora (strain ATCC 22028 / DSM 70294 / BCRC 21397 / CBS 2163 / NBRC 10782 / NRRL Y-8283 / UCD 57-17) (Kluyveromyces polysporus).